A 1140-amino-acid polypeptide reads, in one-letter code: DNA damage-binding protein 1 (1140 aa).

This sequence belongs to the DDB1 family. In terms of assembly, component of the UV-DDB complex which includes DDB1 and DDB2; the heterodimer dimerizes to give rise to a heterotetramer when bound to damaged DNA. The UV-DDB complex interacts with monoubiquitinated histone H2A and binds to XPC via the DDB2 subunit. Component of numerous DCX (DDB1-CUL4-X-box) E3 ubiquitin-protein ligase complexes which consist of a core of DDB1, CUL4A or CUL4B and RBX1. DDB1 may recruit specific substrate targeting subunits to the DCX complex. These substrate targeting subunits are generally known as DCAF (DDB1- and CUL4-associated factor) or CDW (CUL4-DDB1-associated WD40-repeat) proteins. Interacts with Fbw5 and gig. May interact with ohgt.

It localises to the cytoplasm. Its subcellular location is the nucleus. The protein operates within protein modification; protein ubiquitination. Its function is as follows. Protein, which is both involved in DNA repair and protein ubiquitination, as part of the UV-DDB complex and DCX (DDB1-CUL4-X-box) complexes, respectively. Core component of the UV-DDB complex (UV-damaged DNA-binding protein complex), a complex that recognizes UV-induced DNA damage and recruit proteins of the nucleotide excision repair pathway (the NER pathway) to initiate DNA repair. The UV-DDB complex preferentially binds to cyclobutane pyrimidine dimers (CPD), 6-4 photoproducts (6-4 PP), apurinic sites and short mismatches. Also functions as a component of numerous distinct DCX (DDB1-CUL4-X-box) E3 ubiquitin-protein ligase complexes which mediate the ubiquitination and subsequent proteasomal degradation of target proteins. The functional specificity of the DCX E3 ubiquitin-protein ligase complex is determined by the variable substrate recognition component recruited by DDB1. Required for degradation of gig. Required for genomic stability in the face of endogenous DNA lesions and for the response to MMS-induced DNA damage. Required for normal wing development. The polypeptide is DNA damage-binding protein 1 (pic) (Drosophila melanogaster (Fruit fly)).